The primary structure comprises 340 residues: Armadillo repeat-containing protein 12 (340 aa).

The tract at residues 1 to 101 (MGKTIPRFLE…NITRCVYLLE (101 aa)) is interaction with TBC1D15. 3 ARM repeats span residues 100–139 (LEAE…AFSG), 179–218 (LPDY…YLAQ), and 278–318 (SLHE…SLQC). The tract at residues 321–340 (DLGSRPSSCRPSHSCFKTGK) is disordered. The segment covering 324–340 (SRPSSCRPSHSCFKTGK) has biased composition (low complexity).

As to quaternary structure, interacts with TBC1D15, TBC1D21, GK2 and IMMT. Interacts with VDAC2 and VDAC3 in a TBC1D21-dependent manner. Interacts (via ARM domains) with RBBP4. Testis-specific.

Its subcellular location is the nucleus. The protein resides in the mitochondrion outer membrane. Functionally, essential for male fertility and sperm mitochondrial sheath formation. Required for proper mitochondrial elongation and coiling along the flagellum during the formation of the mitochondrial sheath. Facilitates the growth and aggressiveness of neuroblastoma cells. Increases the EZH2 activity and H3K27me3 levels in a RBBP4-dependent manner, and facilitates the enrichment of polycomb repressive complex 2 and H3K27me3 on gene promoters, resulting in transcriptional repression of tumor suppressors affecting the proliferation, invasion, and metastasis of tumor cells. The polypeptide is Armadillo repeat-containing protein 12 (Armc12) (Mus musculus (Mouse)).